Reading from the N-terminus, the 263-residue chain is 4-hydroxy-2-oxo-heptane-1,7-dioate aldolase (263 aa).

The active-site Proton acceptor is histidine 45. Glutamine 147 contacts substrate. Glutamate 149 provides a ligand contact to a divalent metal cation. Residues alanine 174 and aspartate 175 each coordinate substrate. A divalent metal cation is bound at residue aspartate 175.

The protein belongs to the HpcH/HpaI aldolase family. As to quaternary structure, homohexamer; trimer of dimers. The cofactor is a divalent metal cation.

The catalysed reaction is 4-hydroxy-2-oxoheptanedioate = succinate semialdehyde + pyruvate. The protein operates within aromatic compound metabolism; 4-hydroxyphenylacetate degradation; pyruvate and succinate semialdehyde from 4-hydroxyphenylacetate: step 7/7. Functionally, catalyzes the reversible retro-aldol cleavage of 4-hydroxy-2-ketoheptane-1,7-dioate (HKHD) to pyruvate and succinic semialdehyde. The polypeptide is 4-hydroxy-2-oxo-heptane-1,7-dioate aldolase (Salmonella dublin (strain CT_02021853)).